We begin with the raw amino-acid sequence, 61 residues long: UPF0434 protein Bpet2671 (61 aa).

The protein belongs to the UPF0434 family.

This is UPF0434 protein Bpet2671 from Bordetella petrii (strain ATCC BAA-461 / DSM 12804 / CCUG 43448).